Here is a 353-residue protein sequence, read N- to C-terminus: Putative glycosyltransferase TagX (353 aa).

Belongs to the glycosyltransferase 2 family.

The sequence is that of Putative glycosyltransferase TagX (tagX) from Staphylococcus aureus (strain COL).